We begin with the raw amino-acid sequence, 228 residues long: Orotidine 5'-phosphate decarboxylase (228 aa).

Substrate is bound by residues Asp-11, Lys-33, 60 to 69 (DLKLHDIPNT), Thr-117, Arg-178, Gln-186, Gly-206, and Arg-207. Lys-62 serves as the catalytic Proton donor.

The protein belongs to the OMP decarboxylase family. Type 1 subfamily. As to quaternary structure, homodimer.

It carries out the reaction orotidine 5'-phosphate + H(+) = UMP + CO2. It functions in the pathway pyrimidine metabolism; UMP biosynthesis via de novo pathway; UMP from orotate: step 2/2. Its function is as follows. Catalyzes the decarboxylation of orotidine 5'-monophosphate (OMP) to uridine 5'-monophosphate (UMP). This chain is Orotidine 5'-phosphate decarboxylase, found in Ehrlichia canis (strain Jake).